Here is a 471-residue protein sequence, read N- to C-terminus: MMTAKAVDKIPVTLSGFVHQLSDNIYPVEDLAATSVTIFPNAELGSPFDQMNGVAGDGMINIDMTGEKRSLDLPYPSSFAPVSAPRNQTFTYMGKFSIDPQYPGASCYPEGIINIVSAGILQGVTSPASTTASSNVTSASPNPLATGPLGVCTMSQTQPDLDHLYSPPPPPPYSGCAGDLYQDPSAFLSAATTSTSSSLAYPPPPSYPSPKPATDPGLFPMIPDYPGFFPSQCQRDLHGTAGPDRKPFPCPLDSLRVPPPLTPLSTIRNFTLGGPSAGTTGPGASGGSEGPRLPGSSAAAAAAAYNPHHLPLRPILRPRKYPNRPSKTPVHERPYPCPAEGCDRRFSRSDELTRHIRIHTGHKPFQCRICMRNFSRSDHLTTHIRTHTGEKPFACDYCGRKFARSDERKRHTKIHLRQKERKSSAPSSSVPAASTASCTGGAQPGGPLCSSNSSTIGGGSLGPCSSRTRTP.

The segment covering 127–143 (PASTTASSNVTSASPNP) has biased composition (low complexity). Residues 127–177 (PASTTASSNVTSASPNPLATGPLGVCTMSQTQPDLDHLYSPPPPPPYSGCA) form a disordered region. N6-acetyllysine; by EP300 is present on lysine 246. 2 disordered regions span residues 273–301 (GGPS…AAAA) and 313–336 (RPIL…RPYP). Gly residues predominate over residues 280–289 (TGPGASGGSE). 3 consecutive C2H2-type zinc fingers follow at residues 335–359 (YPCP…IRIH), 365–387 (FQCR…IRTH), and 393–415 (FACD…TKIH). Residues 406–471 (DERKRHTKIH…GPCSSRTRTP (66 aa)) form a disordered region. The span at 410–420 (RHTKIHLRQKE) shows a compositional bias: basic residues. The segment covering 424 to 437 (SAPSSSVPAASTAS) has biased composition (low complexity).

Belongs to the EGR C2H2-type zinc-finger protein family. As to quaternary structure, interacts with HCFC1. Interacts with WWP2. Interacts with UBC9. Interacts with CITED1. Interacts (via phosphorylated form) with SFN. In terms of processing, ubiquitinated by WWP2 leading to proteasomal degradation. Acetylated at Lys-246. May be deacetylated by HDAC6, HDAC10 or SIRT1.

It is found in the nucleus. Its pathway is protein modification; protein sumoylation. In terms of biological role, sequence-specific DNA-binding transcription factor. Plays a role in hindbrain segmentation by regulating the expression of a subset of homeobox containing genes and in Schwann cell myelination by regulating the expression of genes involved in the formation and maintenance of myelin. Binds to two EGR2-consensus sites EGR2A (5'-CTGTAGGAG-3') and EGR2B (5'-ATGTAGGTG-3') in the HOXB3 enhancer and promotes HOXB3 transcriptional activation. Binds to specific DNA sites located in the promoter region of HOXA4, HOXB2 and ERBB2. Regulates hindbrain segmentation by controlling the expression of Hox genes, such as HOXA4, HOXB3 and HOXB2, and thereby specifying odd and even rhombomeres. Promotes the expression of HOXB3 in the rhombomere r5 in the hindbrain. Regulates myelination in the peripheral nervous system after birth, possibly by regulating the expression of myelin proteins, such as MPZ, and by promoting the differentiation of Schwann cells. Involved in the development of the jaw openener musculature, probably by playing a role in its innervation through trigeminal motor neurons. May play a role in adipogenesis, possibly by regulating the expression of CEBPB. Its function is as follows. E3 SUMO-protein ligase helping SUMO1 conjugation to its coregulators NAB1 and NAB2, whose sumoylation down-regulates EGR2 transcriptional activity. The sequence is that of E3 SUMO-protein ligase EGR2 (EGR2) from Sus scrofa (Pig).